Here is a 378-residue protein sequence, read N- to C-terminus: Non-functional pseudokinase ZRK6 (378 aa).

Positions 34-378 (DGKCNPIKNF…SNNRSQMSSI (345 aa)) constitute a Protein kinase domain. ATP is bound by residues 40–48 (IKNFSYDQI) and Lys-83.

This sequence belongs to the protein kinase superfamily. Ser/Thr protein kinase family. ZRK subfamily. As to quaternary structure, interacts with RPP13L4/ZAR1.

The polypeptide is Non-functional pseudokinase ZRK6 (Arabidopsis thaliana (Mouse-ear cress)).